The chain runs to 216 residues: Eukaryotic translation initiation factor isoform 4E-2 (216 aa).

The segment at 1–23 (MAEVEAPATAVEAPAAAVATTTP) is disordered. Cys-113 and Cys-152 are joined by a disulfide.

The protein belongs to the eukaryotic initiation factor 4E family. As to quaternary structure, EIF4F is a multi-subunit complex, the composition of which varies with external and internal environmental conditions. It is composed of at least EIF4A, EIF4E and EIF4G. EIF4E is also known to interact with other partners. In higher plants two isoforms of EIF4F have been identified, named isoform EIF4F and isoform EIF(iso)4F. Isoform EIF4F has subunits p220 and p26, whereas isoform EIF(iso)4F has subunits p82 and p28. In terms of processing, according to the redox status, the Cys-113-Cys-152 disulfide bridge may have a role in regulating protein function by affecting its ability to bind capped mRNA.

Recognizes and binds the 7-methylguanosine-containing mRNA cap during an early step in the initiation of protein synthesis and facilitates ribosome binding by inducing the unwinding of the mRNAs secondary structures. The chain is Eukaryotic translation initiation factor isoform 4E-2 from Zea mays (Maize).